The primary structure comprises 280 residues: 2,3,4,5-tetrahydropyridine-2,6-dicarboxylate N-succinyltransferase (280 aa).

The protein belongs to the transferase hexapeptide repeat family.

The protein resides in the cytoplasm. It carries out the reaction (S)-2,3,4,5-tetrahydrodipicolinate + succinyl-CoA + H2O = (S)-2-succinylamino-6-oxoheptanedioate + CoA. It participates in amino-acid biosynthesis; L-lysine biosynthesis via DAP pathway; LL-2,6-diaminopimelate from (S)-tetrahydrodipicolinate (succinylase route): step 1/3. This is 2,3,4,5-tetrahydropyridine-2,6-dicarboxylate N-succinyltransferase from Methylorubrum extorquens (strain PA1) (Methylobacterium extorquens).